Reading from the N-terminus, the 274-residue chain is Nitrogenase iron protein (274 aa).

8-15 (GKGGIGKS) provides a ligand contact to ATP. Cysteine 94 contributes to the [4Fe-4S] cluster binding site. Arginine 97 carries the ADP-ribosylarginine; by dinitrogenase reductase ADP-ribosyltransferase modification. A [4Fe-4S] cluster-binding site is contributed by cysteine 131.

It belongs to the NifH/BchL/ChlL family. In terms of assembly, homodimer. It depends on [4Fe-4S] cluster as a cofactor. The reversible ADP-ribosylation of Arg-97 inactivates the nitrogenase reductase and regulates nitrogenase activity.

The enzyme catalyses N2 + 8 reduced [2Fe-2S]-[ferredoxin] + 16 ATP + 16 H2O = H2 + 8 oxidized [2Fe-2S]-[ferredoxin] + 2 NH4(+) + 16 ADP + 16 phosphate + 6 H(+). In terms of biological role, the key enzymatic reactions in nitrogen fixation are catalyzed by the nitrogenase complex, which has 2 components: the iron protein and the molybdenum-iron protein. The protein is Nitrogenase iron protein of Desulfatibacillum aliphaticivorans.